Reading from the N-terminus, the 434-residue chain is Purple acid phosphatase 22 (434 aa).

The signal sequence occupies residues 1–22 (MKLFGLFLSFTLLFLCPFISQA). A glycan (N-linked (GlcNAc...) asparagine) is linked at asparagine 116. Residues aspartate 148, aspartate 175, and tyrosine 178 each contribute to the Fe cation site. Residue aspartate 175 participates in Zn(2+) binding. Residues asparagine 208 and histidine 292 each contribute to the Zn(2+) site. Asparagine 208 contributes to the substrate binding site. Histidine 302 acts as the Proton donor in catalysis. Histidine 329 serves as a coordination point for Zn(2+). A substrate-binding site is contributed by 329–331 (HVH). Fe cation is bound at residue histidine 331. The N-linked (GlcNAc...) asparagine glycan is linked to asparagine 403.

This sequence belongs to the metallophosphoesterase superfamily. Purple acid phosphatase family. Homodimer. Fe cation serves as cofactor. Requires Zn(2+) as cofactor. In terms of tissue distribution, expressed in roots, stems, leaves, flowers and siliques.

The protein resides in the secreted. It carries out the reaction a phosphate monoester + H2O = an alcohol + phosphate. In Arabidopsis thaliana (Mouse-ear cress), this protein is Purple acid phosphatase 22 (PAP22).